A 229-amino-acid chain; its full sequence is UPF0758 protein Mbar_A2303 (229 aa).

In terms of domain architecture, MPN spans 106–228 (KVCSPKDVYT…YVSLKDEGFV (123 aa)). Residues histidine 177, histidine 179, and aspartate 190 each contribute to the Zn(2+) site. The JAMM motif motif lies at 177 to 190 (HNHPSGDPSPSRED).

It belongs to the UPF0758 family.

This chain is UPF0758 protein Mbar_A2303, found in Methanosarcina barkeri (strain Fusaro / DSM 804).